The chain runs to 710 residues: MSKQTFTTTFAGKPLVVEVGQVAKQANGATVVRYGDSTVLTAAVMSKKMATGDFFPLQVNYEEKMYAAGKFPGGFMKREGRPSTDATLTARLIDRPIRPMFAEGFRNEVQVINTVLSYDENASAPMAAMFGSSLALSISDIPFNGPIAGVQVGYIDGEFIINPDKEQMEASLLELTVAGSKEAINMVESGAKELSEDIMLEALLKGHQAIQELIAFQEQIVAVVGKEKAEVELLQVDADLQADIVAKYNAQLQKAVQVEEKKAREAATEAVKEMVKAEYEERYAEDENLATIMRDVAEILEQMEHAEVRRLITEDKIRPDGRKIDEIRPLDAVVDFLPKVHGSGLFTRGQTQALSVLTLAPMGETQIIDGLAPEYKKRFLHHYNFPQYSVGETGRYGAAGRREIGHGALGERALEQVLPSLEEFPYAIRLVAEVLESNGSSSQASICAGTLALMAGGVPIKAPVAGIAMGLISDGINYTVLTDIQGLEDHFGDMDFKVAGTREGITALQMDIKIAGITPQILEEALAQAKKARFEILDVIEATIAEPRPELAPTAPKIDTIKIDVDKIKVVIGKGGETIDKIIAETGVKIDIDDEGNVSIYSSDQAAIDRTKEIIAGLVREAKVGEVYHAKVVRIEKFGAFVNLFDKTDALVHISEIAWTRTTNVSDVLEVGEDVDVKVIKIDEKGRVDASMKALIPRPPKPEKKEEKHD.

Positions 489 and 495 each coordinate Mg(2+). Residues 556–615 (PKIDTIKIDVDKIKVVIGKGGETIDKIIAETGVKIDIDDEGNVSIYSSDQAAIDRTKEII) enclose the KH domain. Residues 625 to 693 (GEVYHAKVVR…EKGRVDASMK (69 aa)) enclose the S1 motif domain. A disordered region spans residues 691–710 (SMKALIPRPPKPEKKEEKHD). A compositionally biased stretch (basic and acidic residues) spans 700–710 (PKPEKKEEKHD).

The protein belongs to the polyribonucleotide nucleotidyltransferase family. Requires Mg(2+) as cofactor.

The protein localises to the cytoplasm. The enzyme catalyses RNA(n+1) + phosphate = RNA(n) + a ribonucleoside 5'-diphosphate. Functionally, involved in mRNA degradation. Catalyzes the phosphorolysis of single-stranded polyribonucleotides processively in the 3'- to 5'-direction. In Streptococcus pyogenes serotype M49 (strain NZ131), this protein is Polyribonucleotide nucleotidyltransferase.